Here is a 101-residue protein sequence, read N- to C-terminus: Urease subunit gamma (101 aa).

This sequence belongs to the urease gamma subunit family. As to quaternary structure, heterotrimer of UreA (gamma), UreB (beta) and UreC (alpha) subunits. Three heterotrimers associate to form the active enzyme.

Its subcellular location is the cytoplasm. It carries out the reaction urea + 2 H2O + H(+) = hydrogencarbonate + 2 NH4(+). It functions in the pathway nitrogen metabolism; urea degradation; CO(2) and NH(3) from urea (urease route): step 1/1. The polypeptide is Urease subunit gamma (Geobacillus kaustophilus (strain HTA426)).